The chain runs to 70 residues: Flexible pilin (70 aa).

The first 24 residues, 1 to 24, serve as a signal peptide directing secretion; that stretch reads MPNFFRNGCIALVGSVAAMGAAHA.

Homomer.

The protein localises to the fimbrium. Fimbriae (also called pili) are polar filaments radiating from the surface of the bacterium to a length of 0.5-1.5 micrometers and numbering 100-300 per cell. They enable bacteria to colonize the epithelium of specific host organs. Flexible pili possess hemagglutinating function. The protein is Flexible pilin (aerA) of Aeromonas hydrophila.